A 598-amino-acid chain; its full sequence is Probable translation initiation factor IF-2 (598 aa).

The tr-type G domain maps to 3 to 225 (LRCPIVSVLG…GLAQRFLEQK (223 aa)). The G1 stretch occupies residues 12 to 19 (GHVDHGKT). 12-19 (GHVDHGKT) contributes to the GTP binding site. The interval 37–41 (GITQH) is G2. Positions 76-79 (DTPG) are G3. Residues 76 to 80 (DTPGH) and 130 to 133 (NKVD) contribute to the GTP site. The tract at residues 130–133 (NKVD) is G4. The segment at 200 to 202 (SAM) is G5.

It belongs to the TRAFAC class translation factor GTPase superfamily. Classic translation factor GTPase family. IF-2 subfamily.

In terms of biological role, function in general translation initiation by promoting the binding of the formylmethionine-tRNA to ribosomes. Seems to function along with eIF-2. This Methanococcus maripaludis (strain DSM 14266 / JCM 13030 / NBRC 101832 / S2 / LL) protein is Probable translation initiation factor IF-2.